The following is a 106-amino-acid chain: Large ribosomal subunit protein uL24 (106 aa).

It belongs to the universal ribosomal protein uL24 family. Part of the 50S ribosomal subunit.

In terms of biological role, one of two assembly initiator proteins, it binds directly to the 5'-end of the 23S rRNA, where it nucleates assembly of the 50S subunit. Functionally, one of the proteins that surrounds the polypeptide exit tunnel on the outside of the subunit. In Delftia acidovorans (strain DSM 14801 / SPH-1), this protein is Large ribosomal subunit protein uL24.